The chain runs to 332 residues: DNA-directed RNA polymerase subunit alpha (332 aa).

Residues 1 to 234 (MTVTANQVLR…DQLSVFGDFT (234 aa)) form an alpha N-terminal domain (alpha-NTD) region. The segment at 248 to 332 (VDPVLLRPID…AGVASHGMLG (85 aa)) is alpha C-terminal domain (alpha-CTD).

This sequence belongs to the RNA polymerase alpha chain family. Homodimer. The RNAP catalytic core consists of 2 alpha, 1 beta, 1 beta' and 1 omega subunit. When a sigma factor is associated with the core the holoenzyme is formed, which can initiate transcription.

The enzyme catalyses RNA(n) + a ribonucleoside 5'-triphosphate = RNA(n+1) + diphosphate. Functionally, DNA-dependent RNA polymerase catalyzes the transcription of DNA into RNA using the four ribonucleoside triphosphates as substrates. The sequence is that of DNA-directed RNA polymerase subunit alpha from Stenotrophomonas maltophilia (strain R551-3).